The following is a 203-amino-acid chain: dITP/XTP pyrophosphatase (203 aa).

9 to 14 (SSNAGK) provides a ligand contact to substrate. Mg(2+) is bound by residues Glu-42 and Asp-72. Residue Asp-72 is the Proton acceptor of the active site. Residues Ser-73, 161 to 164 (FGYD), Lys-184, and 189 to 190 (HR) each bind substrate.

The protein belongs to the HAM1 NTPase family. In terms of assembly, homodimer. It depends on Mg(2+) as a cofactor.

It carries out the reaction XTP + H2O = XMP + diphosphate + H(+). The catalysed reaction is dITP + H2O = dIMP + diphosphate + H(+). It catalyses the reaction ITP + H2O = IMP + diphosphate + H(+). In terms of biological role, pyrophosphatase that catalyzes the hydrolysis of nucleoside triphosphates to their monophosphate derivatives, with a high preference for the non-canonical purine nucleotides XTP (xanthosine triphosphate), dITP (deoxyinosine triphosphate) and ITP. Seems to function as a house-cleaning enzyme that removes non-canonical purine nucleotides from the nucleotide pool, thus preventing their incorporation into DNA/RNA and avoiding chromosomal lesions. In Acidobacterium capsulatum (strain ATCC 51196 / DSM 11244 / BCRC 80197 / JCM 7670 / NBRC 15755 / NCIMB 13165 / 161), this protein is dITP/XTP pyrophosphatase.